The sequence spans 261 residues: 7beta-hydroxysteroid dehydrogenase (261 aa).

NADP(+) is bound by residues 17-21 (TEGIG), 40-41 (RR), and 66-67 (DL). Catalysis depends on Tyr-156, which acts as the Proton acceptor.

This sequence belongs to the short-chain dehydrogenases/reductases (SDR) family. As to quaternary structure, homodimer.

It carries out the reaction a 7beta-hydroxysteroid + NADP(+) = a 7-oxosteroid + NADPH + H(+). The catalysed reaction is ursocholate + NADP(+) = 3alpha,12alpha-dihydroxy-7-oxo-5beta-cholanate + NADPH + H(+). It catalyses the reaction 7-oxolithocholate + NADPH + H(+) = ursodeoxycholate + NADP(+). The enzyme catalyses 3alpha,7beta-dihydroxy-12-oxo-5beta-cholan-24-oate + NADP(+) = 7,12-dioxo-lithocholate + NADPH + H(+). It carries out the reaction 7beta-hydroxy-3,12-dioxo-5beta-cholan-24-oate + NADP(+) = dehydrocholate + NADPH + H(+). In terms of biological role, 7beta-hydroxysteroid dehydrogenase that catalyzes the reduction of the 7-oxo group of 7-oxosteroids, such as 3alpha,12alpha-dihydroxy-7-oxo-5beta-cholanate, 7-oxolithocholate, 7,12-dioxo-lithocholate and dehydrocholate, to the corresponding 7beta-hydroxysteroids. Is also able to catalyze the reverse oxidation reactions. Together with 7alpha-HSDH encoded in the adjacent gene, is likely involved in the epimerization of the hydroxy group at C-7 of primary bile acids through 7-keto bile acid intermediates. The chain is 7beta-hydroxysteroid dehydrogenase from Clostridium sardiniense (Clostridium absonum).